A 104-amino-acid polypeptide reads, in one-letter code: Inner membrane protein YjcH (104 aa).

At 1 to 24 (MNGTIYQRIEDNAHFRELVEKRQR) the chain is on the cytoplasmic side. A helical transmembrane segment spans residues 25 to 47 (FATILSIIMLAVYIGFILLIAFA). At 48 to 61 (PGWLGTPLNPNTSV) the chain is on the periplasmic side. The chain crosses the membrane as a helical span at residues 62-84 (TRGIPIGVGVIVISFVLTGIYIW). Residues 85 to 104 (RANGEFDRLNNEVLHEVQAS) lie on the Cytoplasmic side of the membrane.

The protein resides in the cell inner membrane. In Escherichia coli (strain K12), this protein is Inner membrane protein YjcH (yjcH).